Reading from the N-terminus, the 304-residue chain is Probable porphobilinogen deaminase (304 aa).

At Cys-240 the chain carries S-(dipyrrolylmethanemethyl)cysteine.

It belongs to the HMBS family. The cofactor is dipyrromethane.

The catalysed reaction is 4 porphobilinogen + H2O = hydroxymethylbilane + 4 NH4(+). Its pathway is porphyrin-containing compound metabolism; protoporphyrin-IX biosynthesis; coproporphyrinogen-III from 5-aminolevulinate: step 2/4. Its function is as follows. Tetrapolymerization of the monopyrrole PBG into the hydroxymethylbilane pre-uroporphyrinogen in several discrete steps. This chain is Probable porphobilinogen deaminase, found in Ignicoccus hospitalis (strain KIN4/I / DSM 18386 / JCM 14125).